A 382-amino-acid polypeptide reads, in one-letter code: Protein RecA (382 aa).

79–86 (GPESSGKT) serves as a coordination point for ATP. Residues 362 to 382 (ATKSAAKGSEVQADVKTKGAA) form a disordered region.

It belongs to the RecA family.

It is found in the cytoplasm. Functionally, can catalyze the hydrolysis of ATP in the presence of single-stranded DNA, the ATP-dependent uptake of single-stranded DNA by duplex DNA, and the ATP-dependent hybridization of homologous single-stranded DNAs. It interacts with LexA causing its activation and leading to its autocatalytic cleavage. In Synechococcus sp. (strain WH7803), this protein is Protein RecA.